We begin with the raw amino-acid sequence, 251 residues long: Imidazole glycerol phosphate synthase subunit HisF (251 aa).

Catalysis depends on residues aspartate 11 and aspartate 130.

It belongs to the HisA/HisF family. As to quaternary structure, heterodimer of HisH and HisF.

It localises to the cytoplasm. The enzyme catalyses 5-[(5-phospho-1-deoxy-D-ribulos-1-ylimino)methylamino]-1-(5-phospho-beta-D-ribosyl)imidazole-4-carboxamide + L-glutamine = D-erythro-1-(imidazol-4-yl)glycerol 3-phosphate + 5-amino-1-(5-phospho-beta-D-ribosyl)imidazole-4-carboxamide + L-glutamate + H(+). Its pathway is amino-acid biosynthesis; L-histidine biosynthesis; L-histidine from 5-phospho-alpha-D-ribose 1-diphosphate: step 5/9. In terms of biological role, IGPS catalyzes the conversion of PRFAR and glutamine to IGP, AICAR and glutamate. The HisF subunit catalyzes the cyclization activity that produces IGP and AICAR from PRFAR using the ammonia provided by the HisH subunit. This chain is Imidazole glycerol phosphate synthase subunit HisF, found in Phocaeicola vulgatus (strain ATCC 8482 / DSM 1447 / JCM 5826 / CCUG 4940 / NBRC 14291 / NCTC 11154) (Bacteroides vulgatus).